Consider the following 126-residue polypeptide: Fluoride-specific ion channel FluC (126 aa).

4 helical membrane passes run 4–24 (ILAI…IGLW), 35–55 (YGTF…LTLI), 68–88 (MLVT…YESF), and 100–120 (IGYM…GVGL). The Na(+) site is built by Gly-75 and Thr-78.

This sequence belongs to the fluoride channel Fluc/FEX (TC 1.A.43) family.

The protein localises to the cell membrane. It catalyses the reaction fluoride(in) = fluoride(out). Na(+) is not transported, but it plays an essential structural role and its presence is essential for fluoride channel function. In terms of biological role, fluoride-specific ion channel. Important for reducing fluoride concentration in the cell, thus reducing its toxicity. This Chloroflexus aurantiacus (strain ATCC 29366 / DSM 635 / J-10-fl) protein is Fluoride-specific ion channel FluC.